Consider the following 515-residue polypeptide: Maturase K (515 aa).

This sequence belongs to the intron maturase 2 family. MatK subfamily.

It is found in the plastid. Its subcellular location is the chloroplast. Its function is as follows. Usually encoded in the trnK tRNA gene intron. Probably assists in splicing its own and other chloroplast group II introns. The protein is Maturase K of Picea sitchensis (Sitka spruce).